A 592-amino-acid polypeptide reads, in one-letter code: Condensin-2 complex subunit H2 (592 aa).

Disordered regions lie at residues 89-116 and 261-285; these read NKKR…DGCE and EAPS…PKQL. The segment covering 96–108 has biased composition (polar residues); the sequence is GSSSDGNQEQAPS.

Belongs to the CND2 H2 (condensin-2 subunit 2) family. In terms of assembly, component of the condensin-2 complex, which contains the smc2 and smc4 heterodimer, and three non SMC subunits, ncapg2, ncaph2 and ncapd3 that probably regulate the complex.

Its subcellular location is the nucleus. Functionally, regulatory subunit of the condensin-2 complex, a complex that seems to provide chromosomes with an additional level of organization and rigidity and in establishing mitotic chromosome architecture. In Danio rerio (Zebrafish), this protein is Condensin-2 complex subunit H2 (ncaph2).